The chain runs to 483 residues: Glutamate--tRNA ligase (483 aa).

Residues 9–19 carry the 'HIGH' region motif; it reads PSPTGYLHIGN. A 'KMSKS' region motif is present at residues 250–254; that stretch reads KLSKR. Position 253 (Lys-253) interacts with ATP.

The protein belongs to the class-I aminoacyl-tRNA synthetase family. Glutamate--tRNA ligase type 1 subfamily. Monomer.

The protein localises to the cytoplasm. The enzyme catalyses tRNA(Glu) + L-glutamate + ATP = L-glutamyl-tRNA(Glu) + AMP + diphosphate. Functionally, catalyzes the attachment of glutamate to tRNA(Glu) in a two-step reaction: glutamate is first activated by ATP to form Glu-AMP and then transferred to the acceptor end of tRNA(Glu). This chain is Glutamate--tRNA ligase, found in Blochmanniella floridana.